Here is a 127-residue protein sequence, read N- to C-terminus: UPF0325 protein VIBHAR_03240 (127 aa).

This sequence belongs to the UPF0325 family.

The sequence is that of UPF0325 protein VIBHAR_03240 from Vibrio campbellii (strain ATCC BAA-1116).